We begin with the raw amino-acid sequence, 160 residues long: Small ribosomal subunit protein bS6 (160 aa).

Basic and acidic residues-rich tracts occupy residues 94-119 (EEHE…RGGR) and 125-152 (RGDR…REDA). Positions 94–160 (EEHEEGPSAM…DADTAAASEE (67 aa)) are disordered.

Belongs to the bacterial ribosomal protein bS6 family.

Its function is as follows. Binds together with bS18 to 16S ribosomal RNA. This Rhodopseudomonas palustris (strain BisB5) protein is Small ribosomal subunit protein bS6.